We begin with the raw amino-acid sequence, 90 residues long: U7-theraphotoxin-Hhn1f (90 aa).

The first 19 residues, 1-19, serve as a signal peptide directing secretion; it reads MKTAIFTVVLALAVFAVLS. Residues 20–50 constitute a propeptide that is removed on maturation; that stretch reads FGWEANEKALSEEFTELIHEKEAASETEARG. Intrachain disulfides connect Cys-51-Cys-65, Cys-58-Cys-70, and Cys-64-Cys-81.

The protein belongs to the neurotoxin 10 (Hwtx-1) family. 13 (Hntx-13) subfamily. Expressed by the venom gland.

It localises to the secreted. Ion channel inhibitor. In Cyriopagopus hainanus (Chinese bird spider), this protein is U7-theraphotoxin-Hhn1f.